Consider the following 954-residue polypeptide: Glycine dehydrogenase (decarboxylating) (954 aa).

N6-(pyridoxal phosphate)lysine is present on lysine 699.

This sequence belongs to the GcvP family. In terms of assembly, the glycine cleavage system is composed of four proteins: P, T, L and H. Pyridoxal 5'-phosphate is required as a cofactor.

The enzyme catalyses N(6)-[(R)-lipoyl]-L-lysyl-[glycine-cleavage complex H protein] + glycine + H(+) = N(6)-[(R)-S(8)-aminomethyldihydrolipoyl]-L-lysyl-[glycine-cleavage complex H protein] + CO2. In terms of biological role, the glycine cleavage system catalyzes the degradation of glycine. The P protein binds the alpha-amino group of glycine through its pyridoxal phosphate cofactor; CO(2) is released and the remaining methylamine moiety is then transferred to the lipoamide cofactor of the H protein. This is Glycine dehydrogenase (decarboxylating) from Nitrobacter winogradskyi (strain ATCC 25391 / DSM 10237 / CIP 104748 / NCIMB 11846 / Nb-255).